The following is a 1399-amino-acid chain: DNA-directed RNA polymerase subunit beta' (1399 aa).

Zn(2+) is bound by residues Cys71, Cys73, Cys86, and Cys89. Mg(2+) is bound by residues Asp462, Asp464, and Asp466. Zn(2+) contacts are provided by Cys810, Cys884, Cys891, and Cys894.

The protein belongs to the RNA polymerase beta' chain family. As to quaternary structure, the RNAP catalytic core consists of 2 alpha, 1 beta, 1 beta' and 1 omega subunit. When a sigma factor is associated with the core the holoenzyme is formed, which can initiate transcription. Mg(2+) serves as cofactor. Requires Zn(2+) as cofactor.

The catalysed reaction is RNA(n) + a ribonucleoside 5'-triphosphate = RNA(n+1) + diphosphate. DNA-dependent RNA polymerase catalyzes the transcription of DNA into RNA using the four ribonucleoside triphosphates as substrates. In Chelativorans sp. (strain BNC1), this protein is DNA-directed RNA polymerase subunit beta'.